The sequence spans 287 residues: MHYKKAFLASLLSSIALTAYAPPEPWATLTPSSKMDGGTTEYRTSFGLAVIPFTVTESKVKRNVISQINDGQVQVTTQKLPHPVSQIGDGQIQVTTQKVPPVVSHIVSQIGDGQLQITTAKNVVTKSTIAVPSKTVTATATSTATAVSQIHDGQVQVTISSASSSSVLSKSKLEPTKKPNNEKVIKVQACKSSGTLAITLQEGVLIDSSGRIGSIVANRQFQFDGPPPQAGAIYAGGWSITKHGTLAIGDNDVFYQCLSGTFYNLYDQSIGGQCNPVHLQTVGLVDC.

A signal peptide spans 1–21 (MHYKKAFLASLLSSIALTAYA). A propeptide spanning residues 22–62 (PPEPWATLTPSSKMDGGTTEYRTSFGLAVIPFTVTESKVKR) is cleaved from the precursor. PIR1/2/3 repeat units lie at residues 62-80 (RNVI…TQKL), 81-99 (PHPV…TQKV), 104-122 (SHIV…TAKN), and 144-162 (ATAV…ISSA).

It belongs to the PIR protein family. Post-translationally, covalently linked to beta-1,3-glucan of the inner cell wall layer via an alkali-sensitive ester linkage between the gamma-carboxyl group of glutamic acids, arising from specific glutamines within the PIR1/2/3 repeats, and hydroxyl groups of glucoses of beta-1,3-glucan chains.

It localises to the secreted. It is found in the cell wall. In terms of biological role, component of the outer cell wall layer. May be involved in meiosis and sporulation. This chain is Cell wall protein PIR5 (PIR5), found in Saccharomyces cerevisiae (strain YJM789) (Baker's yeast).